Here is a 382-residue protein sequence, read N- to C-terminus: Histidinol-phosphate aminotransferase (382 aa).

Positions 1-24 (MTSAPRPRPTLDDLPLREDLRGKS) are disordered. A compositionally biased stretch (basic and acidic residues) spans 9–22 (PTLDDLPLREDLRG). K233 is modified (N6-(pyridoxal phosphate)lysine).

This sequence belongs to the class-II pyridoxal-phosphate-dependent aminotransferase family. Histidinol-phosphate aminotransferase subfamily. Homodimer. Pyridoxal 5'-phosphate is required as a cofactor.

The catalysed reaction is L-histidinol phosphate + 2-oxoglutarate = 3-(imidazol-4-yl)-2-oxopropyl phosphate + L-glutamate. Its pathway is amino-acid biosynthesis; L-histidine biosynthesis; L-histidine from 5-phospho-alpha-D-ribose 1-diphosphate: step 7/9. The sequence is that of Histidinol-phosphate aminotransferase from Mycobacterium ulcerans (strain Agy99).